The sequence spans 263 residues: Microtubule-associated protein RP/EB family member 1 (263 aa).

Positions 14-116 constitute a Calponin-homology (CH) domain; that stretch reads NLSRHDMLAW…FVQWFKKFFD (103 aa). Positions 180-250 constitute an EB1 C-terminal domain; sequence KKAAGDDESA…LYATDEGFVI (71 aa).

The protein belongs to the MAPRE family.

It is found in the cytoplasm. The protein localises to the cytoskeleton. The protein resides in the microtubule organizing center. Its subcellular location is the centrosome. It localises to the golgi apparatus. It is found in the spindle. The protein localises to the spindle pole. Functionally, plus-end tracking protein (+TIP) that binds to the plus-end of microtubules and regulates the dynamics of the microtubule cytoskeleton. Promotes cytoplasmic microtubule nucleation and elongation. Involved in mitotic spindle positioning by stabilizing microtubules and promoting dynamic connection between astral microtubules and the cortex during mitotic chromosome segregation. In Coturnix coturnix (Common quail), this protein is Microtubule-associated protein RP/EB family member 1 (MAPRE1).